A 472-amino-acid chain; its full sequence is Argininosuccinate lyase (472 aa).

Belongs to the lyase 1 family. Argininosuccinate lyase subfamily.

It is found in the cytoplasm. It carries out the reaction 2-(N(omega)-L-arginino)succinate = fumarate + L-arginine. Its pathway is amino-acid biosynthesis; L-arginine biosynthesis; L-arginine from L-ornithine and carbamoyl phosphate: step 3/3. This chain is Argininosuccinate lyase, found in Rhodococcus jostii (strain RHA1).